A 348-amino-acid chain; its full sequence is NADH-ubiquinone oxidoreductase chain 2 (348 aa).

A run of 9 helical transmembrane segments spans residues 1–21 (MSPY…TITA), 60–80 (FLTQ…NAWL), 96–116 (TLII…TWLP), 149–169 (NPTL…WGGL), 177–194 (ILAY…LILQ), 198–220 (TLTL…TFIL), 238–258 (ILTS…PLTG), 273–293 (DLAP…YFYL), and 328–348 (MAAS…LFNI).

This sequence belongs to the complex I subunit 2 family.

The protein resides in the mitochondrion inner membrane. The catalysed reaction is a ubiquinone + NADH + 5 H(+)(in) = a ubiquinol + NAD(+) + 4 H(+)(out). Functionally, core subunit of the mitochondrial membrane respiratory chain NADH dehydrogenase (Complex I) that is believed to belong to the minimal assembly required for catalysis. Complex I functions in the transfer of electrons from NADH to the respiratory chain. The immediate electron acceptor for the enzyme is believed to be ubiquinone. This chain is NADH-ubiquinone oxidoreductase chain 2 (MT-ND2), found in Tetraodon nigroviridis (Spotted green pufferfish).